Reading from the N-terminus, the 366-residue chain is Homer protein homolog 1 (366 aa).

Gly-2 carries the N-acetylglycine modification. A WH1 domain is found at Gly-2–Ala-110. The disordered stretch occupies residues Lys-114–Ser-189. Polar residues-rich tracts occupy residues Ser-138–Gly-147 and Asp-155–Ala-170. The stretch at Lys-193 to Glu-364 forms a coiled coil. Residues Lys-302 to Ser-366 are required for tetramerization. The residue at position 318 (Ser-318) is a Phosphoserine.

This sequence belongs to the Homer family. In terms of assembly, tetramer; this tetrameric structure is critical for forming the high-order complex with SHANK1, which in turn is necessary for the structural and functional integrity of dendritic spines. Isoform 1, isoform 2 and isoform 3 encode a coiled-coil structure that mediates homo- and heteromultimerization. Interacts with GRM1, GRM5, ITPR1, DNM3, RYR1, RYR2 and SHANK3. Interacts with IFT57 and OPHN1. Interacts with SHANK1; forms high-order polymerized complex with a mesh-like network structure, at least composed of SHANK1, HOMER1 and DLGAP1; the complex formation is SHANK1 multimerization dependent. Interacts with NFATC4. Interacts with DAGLA (via PPXXF motif); this interaction is required for the cell membrane localization of DAGLA. Interacts with SRGAP2. As to expression, expressed in skeletal muscle at the level of the Z line, in the forebrain and cerebellum. In terms of tissue distribution, expressed in cardiac and skeletal muscle. Expressed in the hippocampus. As to expression, expressed in skeletal muscle at the level of the Z line, in the heart, forebrain and cerebellum.

The protein resides in the cytoplasm. It localises to the postsynaptic density. The protein localises to the synapse. It is found in the cell projection. Its subcellular location is the dendritic spine. Postsynaptic density scaffolding protein. Binds and cross-links cytoplasmic regions of GRM1, GRM5, ITPR1, DNM3, RYR1, RYR2, SHANK1 and SHANK3. By physically linking GRM1 and GRM5 with ER-associated ITPR1 receptors, it aids the coupling of surface receptors to intracellular calcium release. May also couple GRM1 to PI3 kinase through its interaction with AGAP2. Isoform 1 regulates the trafficking and surface expression of GRM5. Differentially regulates the functions of the calcium activated channel ryanodine receptors RYR1 and RYR2. Isoform 1 decreases the activity of RYR2, and increases the activity of RYR1, whereas isoform 5 counteracts the effects by competing for binding sites. Isoform 3 regulates the trafficking and surface expression of GRM5. Isoform 5 acts as a natural dominant negative, in dynamic competition with constitutively expressed isoform 1, isoform 2 and isoform 3 to regulate synaptic metabotropic glutamate function. Isoform 5, may be involved in the structural changes that occur at synapses during long-lasting neuronal plasticity and development. Forms a high-order complex with SHANK1, which in turn is necessary for the structural and functional integrity of dendritic spines. Negatively regulates T cell activation by inhibiting the calcineurin-NFAT pathway. Acts by competing with calcineurin/PPP3CA for NFAT protein binding, hence preventing NFAT activation by PPP3CA. In Mus musculus (Mouse), this protein is Homer protein homolog 1.